The chain runs to 168 residues: Secretory-abundant heat soluble protein 33020 (168 aa).

An N-terminal signal peptide occupies residues 1-19 (MARFLVALALFGVVAMTAA). Residues 26-57 (EWSGKPWLGKFVAEVSDKSENWEAFVDALGLP) form an SAHS-c1 region. Residues 72-100 (YKQGEHYHHILSLPDKNINKDIEFTLGQE) form an SAHS-c2 region. The interval 113–162 (KYFEDGNKLVADVSIPAKGKSIHDVYDVQGDQLIKSYKVGDVVAKKWFKK) is SAHS-c3.

This sequence belongs to the Secretory-abundant heat soluble protein (SAHS) family.

The protein resides in the secreted. Functionally, secreted heat soluble protein acting as a molecular shield in water-deficient condition. Tardigrade-specific intrinsically disordered proteins (TDPs) are essential for desiccation tolerance by forming non-crystalline amorphous solids upon desiccation, and this vitrified state mirrors their protective capabilities. The chain is Secretory-abundant heat soluble protein 33020 from Hypsibius exemplaris (Freshwater tardigrade).